The chain runs to 28 residues: Basic phospholipase A2 homolog BmatTX-II (28 aa).

Monomer. In terms of tissue distribution, expressed by the venom gland.

It localises to the secreted. Its function is as follows. Snake venom phospholipase A2 homolog that lacks enzymatic activity. Shows high myotoxic activity, neutrophil activation (demonstrated by activation induction of IL-1beta production), and slight cytotoxicity against Jurkat (leukemia T) and SK-BR-3 (breast adenocarcinoma) tumor cell lines. A model of myotoxic mechanism has been proposed: an apo Lys49-PLA2 is activated by the entrance of a hydrophobic molecule (e.g. fatty acid) at the hydrophobic channel of the protein leading to a reorientation of a monomer. This reorientation causes a transition between 'inactive' to 'active' states, causing alignment of C-terminal and membrane-docking sites (MDoS) side-by-side and putting the membrane-disruption sites (MDiS) in the same plane, exposed to solvent and in a symmetric position for both monomers. The MDoS region stabilizes the toxin on membrane by the interaction of charged residues with phospholipid head groups. Subsequently, the MDiS region destabilizes the membrane with penetration of hydrophobic residues. This insertion causes a disorganization of the membrane, allowing an uncontrolled influx of ions (i.e. calcium and sodium), and eventually triggering irreversible intracellular alterations and cell death. This Bothrops mattogrossensis (Pitviper) protein is Basic phospholipase A2 homolog BmatTX-II.